Consider the following 451-residue polypeptide: UDP-N-acetylmuramoylalanine--D-glutamate ligase (451 aa).

118 to 124 lines the ATP pocket; the sequence is GTKGKST.

The protein belongs to the MurCDEF family.

The protein resides in the cytoplasm. The catalysed reaction is UDP-N-acetyl-alpha-D-muramoyl-L-alanine + D-glutamate + ATP = UDP-N-acetyl-alpha-D-muramoyl-L-alanyl-D-glutamate + ADP + phosphate + H(+). It participates in cell wall biogenesis; peptidoglycan biosynthesis. In terms of biological role, cell wall formation. Catalyzes the addition of glutamate to the nucleotide precursor UDP-N-acetylmuramoyl-L-alanine (UMA). The sequence is that of UDP-N-acetylmuramoylalanine--D-glutamate ligase from Borreliella burgdorferi (strain ZS7) (Borrelia burgdorferi).